The chain runs to 482 residues: tRNA sulfurtransferase (482 aa).

In terms of domain architecture, THUMP spans 61-165 (PAIRDALTRI…NDRLLLVKGR (105 aa)). Residues 183 to 184 (LI), K265, G287, and Q296 contribute to the ATP site. A disulfide bond links C344 and C456. Residues 404-482 (FGANDAILDI…GFSNVKVYRP (79 aa)) form the Rhodanese domain. The active-site Cysteine persulfide intermediate is C456.

This sequence belongs to the ThiI family.

Its subcellular location is the cytoplasm. It carries out the reaction [ThiI sulfur-carrier protein]-S-sulfanyl-L-cysteine + a uridine in tRNA + 2 reduced [2Fe-2S]-[ferredoxin] + ATP + H(+) = [ThiI sulfur-carrier protein]-L-cysteine + a 4-thiouridine in tRNA + 2 oxidized [2Fe-2S]-[ferredoxin] + AMP + diphosphate. The enzyme catalyses [ThiS sulfur-carrier protein]-C-terminal Gly-Gly-AMP + S-sulfanyl-L-cysteinyl-[cysteine desulfurase] + AH2 = [ThiS sulfur-carrier protein]-C-terminal-Gly-aminoethanethioate + L-cysteinyl-[cysteine desulfurase] + A + AMP + 2 H(+). The protein operates within cofactor biosynthesis; thiamine diphosphate biosynthesis. Its function is as follows. Catalyzes the ATP-dependent transfer of a sulfur to tRNA to produce 4-thiouridine in position 8 of tRNAs, which functions as a near-UV photosensor. Also catalyzes the transfer of sulfur to the sulfur carrier protein ThiS, forming ThiS-thiocarboxylate. This is a step in the synthesis of thiazole, in the thiamine biosynthesis pathway. The sulfur is donated as persulfide by IscS. The protein is tRNA sulfurtransferase of Klebsiella pneumoniae (strain 342).